A 336-amino-acid chain; its full sequence is Dihydroorotate dehydrogenase (quinone) (336 aa).

FMN-binding positions include 62–66 (AGLDK) and Thr-86. Substrate is bound at residue Lys-66. 111–115 (NRMGF) lines the substrate pocket. Positions 139 and 172 each coordinate FMN. Asn-172 lines the substrate pocket. The Nucleophile role is filled by Ser-175. Asn-177 contributes to the substrate binding site. Positions 217 and 245 each coordinate FMN. 246-247 (NT) provides a ligand contact to substrate. FMN-binding positions include Gly-268, Gly-297, and 318-319 (YS).

It belongs to the dihydroorotate dehydrogenase family. Type 2 subfamily. In terms of assembly, monomer. It depends on FMN as a cofactor.

It is found in the cell membrane. The catalysed reaction is (S)-dihydroorotate + a quinone = orotate + a quinol. The protein operates within pyrimidine metabolism; UMP biosynthesis via de novo pathway; orotate from (S)-dihydroorotate (quinone route): step 1/1. Functionally, catalyzes the conversion of dihydroorotate to orotate with quinone as electron acceptor. The chain is Dihydroorotate dehydrogenase (quinone) from Enterobacter sp. (strain 638).